Consider the following 428-residue polypeptide: Serine--tRNA ligase (428 aa).

L-serine is bound at residue 231-233 (TSE). ATP-binding positions include 262–264 (RRE) and Val-278. L-serine is bound at residue Glu-285. 349–352 (ELTS) is a binding site for ATP. Thr-384 is an L-serine binding site.

Belongs to the class-II aminoacyl-tRNA synthetase family. Type-1 seryl-tRNA synthetase subfamily. As to quaternary structure, homodimer. The tRNA molecule binds across the dimer.

Its subcellular location is the cytoplasm. The catalysed reaction is tRNA(Ser) + L-serine + ATP = L-seryl-tRNA(Ser) + AMP + diphosphate + H(+). It carries out the reaction tRNA(Sec) + L-serine + ATP = L-seryl-tRNA(Sec) + AMP + diphosphate + H(+). It functions in the pathway aminoacyl-tRNA biosynthesis; selenocysteinyl-tRNA(Sec) biosynthesis; L-seryl-tRNA(Sec) from L-serine and tRNA(Sec): step 1/1. Catalyzes the attachment of serine to tRNA(Ser). Is also able to aminoacylate tRNA(Sec) with serine, to form the misacylated tRNA L-seryl-tRNA(Sec), which will be further converted into selenocysteinyl-tRNA(Sec). This Bifidobacterium longum (strain NCC 2705) protein is Serine--tRNA ligase.